A 514-amino-acid chain; its full sequence is Putative ankyrin repeat protein R863 (514 aa).

ANK repeat units follow at residues 45–74 (AKID…LKHP), 84–114 (KSLN…DINS), 115–144 (KKNR…DVRA), 146–174 (KDYA…NIKV), 176–204 (DNFA…NIRA), 205–234 (DNNY…DIRA), 236–264 (NNYA…NVKS), 266–294 (NDCA…DVRS), 295–324 (ENDY…NVRA), 325–354 (DNNY…NIRS), 356–384 (NDYA…NFKS), 385–414 (DYDC…DIRV), 415–444 (NNDY…DIRA), 446–474 (NDYA…NVKA), and 476–504 (NNYA…DVRS).

The protein is Putative ankyrin repeat protein R863 of Acanthamoeba polyphaga mimivirus (APMV).